The following is a 493-amino-acid chain: MGTFFVDFYNEYPDTSYIKIPTNPLDRVIGQDDAVKIAMVAAKQRRHLLLVGPPGVGKSMIAQAMSFYIDRPTEEIRVVHNPQYPERPFVEIKTREEVMAEREEETSTSGIIIDPKDAPTSVAERLGYRCSKCGFYSSPSDAVCPNCNSPKIQMGTQGPFGDVFNVIGAAFGVQNNLDKVTLTRRNGDHDEIIVYERYNDKIRVLDEKTLERRRRLEKKSPSKTIVPIDRNPFVLATGASETELLGDVRHDPYGGHPQLGTLPYERVIAGAVHEAHQGVLFIDEITHLGNLQRYILTAMQEKTFPITGRNPQSAGASVRVDKVPADFILVAACNINDLPYILSPLRSRIVGNGYEILMKTTMKDTDENRMKYLQFISQEITMDGKIPHMTMEAAELIIEEGKKRARIIDKKNNELTLRLRELGGLIRAAGDIAVFKGNKLIEKEDVEEAIKLYVPVEEKITKEYGSMAAAYSSENTTSQKDFYNYNLDDRSYE.

52–59 (GPPGVGKS) lines the ATP pocket.

This sequence belongs to the peptidase S16 family.

In Thermoplasma acidophilum (strain ATCC 25905 / DSM 1728 / JCM 9062 / NBRC 15155 / AMRC-C165), this protein is Putative lon protease homolog.